A 140-amino-acid polypeptide reads, in one-letter code: DegV domain-containing 15.5 kDa protein (140 aa).

Residues 4 to 140 (QIIVTDSTSD…ELVLLQSKKI (137 aa)) enclose the DegV domain. 2 residues coordinate hexadecanoate: threonine 61 and serine 93.

May bind long-chain fatty acids, such as palmitate, and may play a role in lipid transport or fatty acid metabolism. The sequence is that of DegV domain-containing 15.5 kDa protein from Staphylococcus aureus.